Consider the following 346-residue polypeptide: Anthranilate phosphoribosyltransferase (346 aa).

Residues Gly81, 84–85 (GD), 91–94 (NVST), 109–117 (KHGNRSVSS), and Ser121 each bind 5-phospho-alpha-D-ribose 1-diphosphate. Gly81 is an anthranilate binding site. Ser93 serves as a coordination point for Mg(2+). Asn112 serves as a coordination point for anthranilate. Arg167 provides a ligand contact to anthranilate. The Mg(2+) site is built by Asp226 and Glu227.

Belongs to the anthranilate phosphoribosyltransferase family. In terms of assembly, homodimer. Mg(2+) is required as a cofactor.

It catalyses the reaction N-(5-phospho-beta-D-ribosyl)anthranilate + diphosphate = 5-phospho-alpha-D-ribose 1-diphosphate + anthranilate. Its pathway is amino-acid biosynthesis; L-tryptophan biosynthesis; L-tryptophan from chorismate: step 2/5. Its function is as follows. Catalyzes the transfer of the phosphoribosyl group of 5-phosphorylribose-1-pyrophosphate (PRPP) to anthranilate to yield N-(5'-phosphoribosyl)-anthranilate (PRA). The chain is Anthranilate phosphoribosyltransferase from Hahella chejuensis (strain KCTC 2396).